The following is a 124-amino-acid chain: Suppressor of RNA silencing (124 aa).

The basic motif (BM) stretch occupies residues 1–14 (MPKSEFFREERKRR). The C-2 stretch occupies residues 30-68 (CGYSCGMPPAVEKVSVPADTEEDVYMLIFPYEQFCGEKH). The stretch at 72-124 (YESLKDVSDDELKLRRLERQRETLLASFQQKLKRYDEKIALLSEKFKNLRSKL) forms a coiled coil. Residue serine 79 is modified to Phosphoserine.

This sequence belongs to the virgaviridae suppressor of RNA silencing family. Homooligomer. Post-translationally, phosphorylated at Ser-79 by a host PKA-like kinase; the phosphorylation at this site seems to suppress host cell death.

It localises to the host chloroplast envelope. Its subcellular location is the host endoplasmic reticulum. The protein localises to the host cell junction. The protein resides in the host plasmodesma. Suppressor of RNA-mediated gene silencing, also known as post-transcriptional gene silencing (PTGS), a mechanism of plant viral defense that limits the accumulation of viral RNAs. Promotes viral cell-to-cell long distance movement. This chain is Suppressor of RNA silencing, found in Peanut clump virus (isolate 87/TGTA2) (PCV).